Here is a 354-residue protein sequence, read N- to C-terminus: UDP-N-acetylglucosamine--N-acetylmuramyl-(pentapeptide) pyrophosphoryl-undecaprenol N-acetylglucosamine transferase 1 (354 aa).

Residues 12-14 (TAG), arginine 163, serine 193, and glutamine 287 contribute to the UDP-N-acetyl-alpha-D-glucosamine site.

It belongs to the glycosyltransferase 28 family. MurG subfamily.

It localises to the cell membrane. The catalysed reaction is di-trans,octa-cis-undecaprenyl diphospho-N-acetyl-alpha-D-muramoyl-L-alanyl-D-glutamyl-meso-2,6-diaminopimeloyl-D-alanyl-D-alanine + UDP-N-acetyl-alpha-D-glucosamine = di-trans,octa-cis-undecaprenyl diphospho-[N-acetyl-alpha-D-glucosaminyl-(1-&gt;4)]-N-acetyl-alpha-D-muramoyl-L-alanyl-D-glutamyl-meso-2,6-diaminopimeloyl-D-alanyl-D-alanine + UDP + H(+). It participates in cell wall biogenesis; peptidoglycan biosynthesis. Cell wall formation. Catalyzes the transfer of a GlcNAc subunit on undecaprenyl-pyrophosphoryl-MurNAc-pentapeptide (lipid intermediate I) to form undecaprenyl-pyrophosphoryl-MurNAc-(pentapeptide)GlcNAc (lipid intermediate II). This Bacillus thuringiensis (strain Al Hakam) protein is UDP-N-acetylglucosamine--N-acetylmuramyl-(pentapeptide) pyrophosphoryl-undecaprenol N-acetylglucosamine transferase 1.